Here is a 460-residue protein sequence, read N- to C-terminus: Acetyl-CoA decarbonylase/synthase complex subunit beta (460 aa).

Residues cysteine 188, cysteine 191, cysteine 277, and cysteine 279 each contribute to the [Ni-Fe-S] cluster site. Residues 402 to 416 are compositionally biased toward acidic residues; the sequence is EETEPEEEEVEEAYP. A disordered region spans residues 402–422; the sequence is EETEPEEEEVEEAYPEETPIP.

Belongs to the CdhC family. Monomer. The ACDS complex is made up of alpha, epsilon, beta, gamma and delta chains with a probable stoichiometry of (alpha(2)epsilon(2))(4)-beta(8)-(gamma(1)delta(1))(8). The cofactor is [Ni-Fe-S] cluster.

The enzyme catalyses Co(I)-[corrinoid Fe-S protein] + acetyl-CoA + H(+) = methyl-Co(III)-[corrinoid Fe-S protein] + CO + CoA. Its function is as follows. Part of a complex that catalyzes the reversible cleavage of acetyl-CoA, allowing autotrophic growth from CO(2). The alpha-epsilon complex generates CO from CO(2), while the beta subunit (this protein) combines the CO with CoA and a methyl group to form acetyl-CoA. The methyl group, which is incorporated into acetyl-CoA, is transferred to the beta subunit by a corrinoid iron-sulfur protein (the gamma-delta complex). This is Acetyl-CoA decarbonylase/synthase complex subunit beta from Methanothermobacter thermautotrophicus (strain ATCC 29096 / DSM 1053 / JCM 10044 / NBRC 100330 / Delta H) (Methanobacterium thermoautotrophicum).